A 684-amino-acid chain; its full sequence is Homoaconitase, mitochondrial (684 aa).

Cys337, Cys397, and Cys400 together coordinate [4Fe-4S] cluster.

It belongs to the aconitase/IPM isomerase family. [4Fe-4S] cluster serves as cofactor.

Its subcellular location is the mitochondrion. It carries out the reaction (2R,3S)-homoisocitrate = cis-homoaconitate + H2O. It functions in the pathway amino-acid biosynthesis; L-lysine biosynthesis via AAA pathway; L-alpha-aminoadipate from 2-oxoglutarate: step 3/5. Its function is as follows. Catalyzes the reversible hydration of cis-homoaconitate to (2R,3S)-homoisocitrate, a step in the alpha-aminoadipate pathway for lysine biosynthesis. The polypeptide is Homoaconitase, mitochondrial (LYS4) (Candida albicans (strain SC5314 / ATCC MYA-2876) (Yeast)).